A 221-amino-acid chain; its full sequence is Octanoyltransferase (221 aa).

Positions 40–218 (PNLEDVLILL…AFAEVFGLEL (179 aa)) constitute a BPL/LPL catalytic domain. Substrate is bound by residues 82–89 (RGGEVTYH), 149–151 (AIG), and 162–164 (GFA). The active-site Acyl-thioester intermediate is the Cys-180.

This sequence belongs to the LipB family.

It is found in the cytoplasm. The enzyme catalyses octanoyl-[ACP] + L-lysyl-[protein] = N(6)-octanoyl-L-lysyl-[protein] + holo-[ACP] + H(+). It participates in protein modification; protein lipoylation via endogenous pathway; protein N(6)-(lipoyl)lysine from octanoyl-[acyl-carrier-protein]: step 1/2. Functionally, catalyzes the transfer of endogenously produced octanoic acid from octanoyl-acyl-carrier-protein onto the lipoyl domains of lipoate-dependent enzymes. Lipoyl-ACP can also act as a substrate although octanoyl-ACP is likely to be the physiological substrate. This Nostoc sp. (strain PCC 7120 / SAG 25.82 / UTEX 2576) protein is Octanoyltransferase.